We begin with the raw amino-acid sequence, 1066 residues long: Carbamoyl phosphate synthase large chain (1066 aa).

The segment at 1–401 (MPKNNNIKKV…ALMKAVRSLE (401 aa)) is carboxyphosphate synthetic domain. ATP-binding residues include Arg129, Arg169, Gly175, Gly176, Arg208, Ile210, Glu215, Gly241, Val242, His243, Gln284, and Glu298. Residues 133–327 (KNTMEKIGEP…IAKVAAKIAL (195 aa)) enclose the ATP-grasp 1 domain. Mg(2+)-binding residues include Gln284, Glu298, and Asn300. Mn(2+)-binding residues include Gln284, Glu298, and Asn300. Residues 402 to 547 (QNIYSMNYGD…YSCFDSENEV (146 aa)) are oligomerization domain. The tract at residues 548–931 (DATKTKKKVL…ALYKAFLGAG (384 aa)) is carbamoyl phosphate synthetic domain. In terms of domain architecture, ATP-grasp 2 spans 673–863 (DEILEKCCIP…IVSLASKAVL (191 aa)). Residues Arg709, Lys748, Leu750, Glu754, Gly779, Ile780, His781, Ser782, Gln822, and Glu834 each coordinate ATP. Mg(2+) is bound by residues Gln822, Glu834, and Asn836. 3 residues coordinate Mn(2+): Gln822, Glu834, and Asn836. The 135-residue stretch at 932–1066 (INLPKHKKMI…ELSLIDIARI (135 aa)) folds into the MGS-like domain. The allosteric domain stretch occupies residues 932-1066 (INLPKHKKMI…ELSLIDIARI (135 aa)).

The protein belongs to the CarB family. Composed of two chains; the small (or glutamine) chain promotes the hydrolysis of glutamine to ammonia, which is used by the large (or ammonia) chain to synthesize carbamoyl phosphate. Tetramer of heterodimers (alpha,beta)4. Mg(2+) is required as a cofactor. Mn(2+) serves as cofactor.

It catalyses the reaction hydrogencarbonate + L-glutamine + 2 ATP + H2O = carbamoyl phosphate + L-glutamate + 2 ADP + phosphate + 2 H(+). The enzyme catalyses hydrogencarbonate + NH4(+) + 2 ATP = carbamoyl phosphate + 2 ADP + phosphate + 2 H(+). It participates in amino-acid biosynthesis; L-arginine biosynthesis; carbamoyl phosphate from bicarbonate: step 1/1. The protein operates within pyrimidine metabolism; UMP biosynthesis via de novo pathway; (S)-dihydroorotate from bicarbonate: step 1/3. Large subunit of the glutamine-dependent carbamoyl phosphate synthetase (CPSase). CPSase catalyzes the formation of carbamoyl phosphate from the ammonia moiety of glutamine, carbonate, and phosphate donated by ATP, constituting the first step of 2 biosynthetic pathways, one leading to arginine and/or urea and the other to pyrimidine nucleotides. The large subunit (synthetase) binds the substrates ammonia (free or transferred from glutamine from the small subunit), hydrogencarbonate and ATP and carries out an ATP-coupled ligase reaction, activating hydrogencarbonate by forming carboxy phosphate which reacts with ammonia to form carbamoyl phosphate. The protein is Carbamoyl phosphate synthase large chain of Lachnoclostridium phytofermentans (strain ATCC 700394 / DSM 18823 / ISDg) (Clostridium phytofermentans).